The chain runs to 746 residues: Exostosin-1 (746 aa).

Over 1–7 (MQAKKRY) the chain is Cytoplasmic. A helical; Signal-anchor for type II membrane protein transmembrane segment spans residues 8–28 (FILLSAGSCLALLFYFGGLQF). The Lumenal portion of the chain corresponds to 29–746 (RASRSHSRRE…RKKYRDIERL (718 aa)). Asn-89 is a glycosylation site (N-linked (GlcNAc...) asparagine). Disulfide bonds link Cys-98/Cys-103 and Cys-109/Cys-152. Residues Leu-166 and Tyr-203 each contribute to the a protein site. Residues Lys-267, Lys-269, Tyr-271, and Arg-280 each contribute to the UDP site. Cys-298 and Cys-312 form a disulfide bridge. His-300 lines the a protein pocket. Residues Tyr-319 and Tyr-324 each contribute to the UDP site. Residue Asn-330 is glycosylated (N-linked (GlcNAc...) asparagine). 2 disulfides stabilise this stretch: Cys-334-Cys-355 and Cys-652-Cys-704. UDP-binding residues include Arg-346 and Glu-349.

It belongs to the glycosyltransferase 47 family. Part of the heparan sulfate polymerase, a dimeric complex composed of EXT1 and EXT2. Could also form homooligomeric complexes. Interacts with NDST1. Post-translationally, N-glycosylated.

The protein localises to the golgi apparatus membrane. It is found in the golgi apparatus. The protein resides in the cis-Golgi network membrane. It localises to the endoplasmic reticulum membrane. It carries out the reaction 3-O-{alpha-D-GlcNAc-[(1-&gt;4)-beta-D-GlcA-(1-&gt;4)-alpha-D-GlcNAc](n)-(1-&gt;4)-beta-D-GlcA-(1-&gt;3)-beta-D-Gal-(1-&gt;3)-beta-D-Gal-(1-&gt;4)-beta-D-Xyl}-L-seryl-[protein] + UDP-alpha-D-glucuronate = 3-O-{[(1-&gt;4)-beta-D-GlcA-(1-&gt;4)-alpha-D-GlcNAc](n+1)-(1-&gt;4)-beta-D-GlcA-(1-&gt;3)-beta-D-Gal-(1-&gt;3)-beta-D-Gal-(1-&gt;4)-beta-D-Xyl}-L-seryl-[protein] + UDP + H(+). It functions in the pathway protein modification; protein glycosylation. Glycosyltransferase forming with EXT2 the heterodimeric heparan sulfate polymerase which catalyzes the elongation of the heparan sulfate glycan backbone. Glycan backbone extension consists in the alternating transfer of (1-&gt;4)-beta-D-GlcA and (1-&gt;4)-alpha-D-GlcNAc residues from their respective UDP-sugar donors. Both EXT1 and EXT2 are required for the full activity of the polymerase since EXT1 bears the N-acetylglucosaminyl-proteoglycan 4-beta-glucuronosyltransferase activity within the complex while EXT2 carries the glucuronosyl-N-acetylglucosaminyl-proteoglycan 4-alpha-N-acetylglucosaminyltransferase activity. Heparan sulfate proteoglycans are ubiquitous components of the extracellular matrix and play an important role in tissue homeostasis and signaling. The sequence is that of Exostosin-1 (EXT1) from Bos taurus (Bovine).